The primary structure comprises 249 residues: Isoprenyl transferase (249 aa).

The active site involves Asp25. Residue Asp25 coordinates Mg(2+). Substrate is bound by residues 26-29, Trp30, Arg38, His42, and 70-72; these read GNGR and STE. Residue Asn73 is the Proton acceptor of the active site. Substrate contacts are provided by residues Trp74, Arg76, Arg197, and 203–205; that span reads RLS. Residue Glu216 participates in Mg(2+) binding.

It belongs to the UPP synthase family. As to quaternary structure, homodimer. Mg(2+) is required as a cofactor.

Its function is as follows. Catalyzes the condensation of isopentenyl diphosphate (IPP) with allylic pyrophosphates generating different type of terpenoids. The sequence is that of Isoprenyl transferase from Streptococcus pyogenes serotype M6 (strain ATCC BAA-946 / MGAS10394).